Consider the following 772-residue polypeptide: Probable beta-glucosidase M (772 aa).

An N-terminal signal peptide occupies residues methionine 1–alanine 20. Residue asparagine 259 is glycosylated (N-linked (GlcNAc...) asparagine). Residue aspartate 287 is part of the active site. 7 N-linked (GlcNAc...) asparagine glycosylation sites follow: asparagine 315, asparagine 322, asparagine 438, asparagine 523, asparagine 547, asparagine 574, and asparagine 586.

The protein belongs to the glycosyl hydrolase 3 family.

The protein resides in the secreted. The catalysed reaction is Hydrolysis of terminal, non-reducing beta-D-glucosyl residues with release of beta-D-glucose.. The protein operates within glycan metabolism; cellulose degradation. Its function is as follows. Beta-glucosidases are one of a number of cellulolytic enzymes involved in the degradation of cellulosic biomass. Catalyzes the last step releasing glucose from the inhibitory cellobiose. This is Probable beta-glucosidase M (bglM) from Emericella nidulans (strain FGSC A4 / ATCC 38163 / CBS 112.46 / NRRL 194 / M139) (Aspergillus nidulans).